Consider the following 277-residue polypeptide: Outer plastidial membrane protein porin (277 aa).

This sequence belongs to the eukaryotic mitochondrial porin (TC 1.B.8.1) family.

Its subcellular location is the plastid outer membrane. Functionally, forms a channel through the cell membrane that allows diffusion of small hydrophilic molecules. The channel adopts an open conformation at low or zero membrane potential and a closed conformation at potentials above 30-40 mV. The open state has a weak anion selectivity whereas the closed state is cation-selective. The sequence is that of Outer plastidial membrane protein porin (POR1) from Zea mays (Maize).